The chain runs to 433 residues: Probable M18 family aminopeptidase 2 (433 aa).

Zn(2+) is bound by residues His84, His161, and His409.

The protein belongs to the peptidase M18 family. The cofactor is Zn(2+).

The sequence is that of Probable M18 family aminopeptidase 2 (apeB) from Clostridium acetobutylicum (strain ATCC 824 / DSM 792 / JCM 1419 / IAM 19013 / LMG 5710 / NBRC 13948 / NRRL B-527 / VKM B-1787 / 2291 / W).